Consider the following 119-residue polypeptide: MARSVVVSLFVLLALAGLEAIQHAPKIQVYSRHPAENGKPNFLNSYVSGFHPSDIEVDLLKNGKKIEKVEHSDLSFSKDWSFYLLYYTEFTPNEKDEYACRVSHVTFQTPKTVKWDRTM.

The first 20 residues, 1 to 20 (MARSVVVSLFVLLALAGLEA), serve as a signal peptide directing secretion. One can recognise an Ig-like C1-type domain in the interval 25 to 114 (PKIQVYSRHP…VTFQTPKTVK (90 aa)).

Belongs to the beta-2-microglobulin family. As to quaternary structure, heterodimer of an alpha chain and a beta chain. Beta-2-microglobulin is the beta-chain of major histocompatibility complex class I molecules.

It localises to the secreted. Functionally, component of the class I major histocompatibility complex (MHC). Involved in the presentation of peptide antigens to the immune system. The chain is Beta-2-microglobulin (B2M) from Brachyteles arachnoides (Southern muriqui).